The sequence spans 459 residues: Ribulose bisphosphate carboxylase large chain (459 aa).

Lys-4 bears the N6,N6,N6-trimethyllysine mark. Residues Asn-113 and Thr-163 each contribute to the substrate site. Residue Lys-165 is the Proton acceptor of the active site. Lys-167 contacts substrate. Mg(2+) is bound by residues Lys-191, Asp-193, and Glu-194. Lys-191 carries the post-translational modification N6-carboxylysine. The Proton acceptor role is filled by His-284. Substrate contacts are provided by Arg-285, His-317, and Ser-369.

It belongs to the RuBisCO large chain family. Type I subfamily. In terms of assembly, heterohexadecamer of 8 large chains and 8 small chains; disulfide-linked. The disulfide link is formed within the large subunit homodimers. It depends on Mg(2+) as a cofactor. In terms of processing, the disulfide bond which can form in the large chain dimeric partners within the hexadecamer appears to be associated with oxidative stress and protein turnover.

It is found in the plastid. The protein localises to the chloroplast. The enzyme catalyses 2 (2R)-3-phosphoglycerate + 2 H(+) = D-ribulose 1,5-bisphosphate + CO2 + H2O. It catalyses the reaction D-ribulose 1,5-bisphosphate + O2 = 2-phosphoglycolate + (2R)-3-phosphoglycerate + 2 H(+). In terms of biological role, ruBisCO catalyzes two reactions: the carboxylation of D-ribulose 1,5-bisphosphate, the primary event in carbon dioxide fixation, as well as the oxidative fragmentation of the pentose substrate in the photorespiration process. Both reactions occur simultaneously and in competition at the same active site. The polypeptide is Ribulose bisphosphate carboxylase large chain (Apium graveolens (Celery)).